A 598-amino-acid polypeptide reads, in one-letter code: Nuclear receptor subfamily 4 group A member 2 (598 aa).

The segment at 1-22 (MPCVQAQYGSSPQGASPASQSY) is disordered. A compositionally biased stretch (low complexity) spans 8–22 (YGSSPQGASPASQSY). The segment at residues 260 to 335 (EGLCAVCGDN…VGMVKEVVRT (76 aa)) is a DNA-binding region (nuclear receptor). 2 consecutive NR C4-type zinc fingers follow at residues 263-283 (CAVC…CEGC) and 299-323 (CLAN…FQKC). The Bipartite nuclear localization signal (NLS1) signature appears at 287 to 314 (FKRTVQKNAKYVCLANKNCPVDKRRRNR). The disordered stretch occupies residues 337–361 (SLKGRRGRLPSKPKSPQDPSPPSPP). Residues 338-350 (LKGRRGRLPSKPK) carry the Nuclear localization signal (NLS1) motif. The segment covering 352–361 (PQDPSPPSPP) has biased composition (pro residues). An NR LBD domain is found at 360–595 (PPVSLISALV…AIIDKLFLDT (236 aa)). The nuclear export sequence (NES1) signature appears at 443 to 452 (FLELFVLRLA). A nuclear export sequence (NES2) motif is present at residues 568–577 (QGLQRIFYLK).

This sequence belongs to the nuclear hormone receptor family. NR4 subfamily. Interacts with SFPQ, NCOR2, SIN3A and HADC1. The interaction with NCOR2 increases in the absence of PITX3. Interacts with PER2. As to expression, shows a ubiquitous distribution in the cerebral cortex, hippocampus, thalamus, amygdala, and midbrain. Expression increases in prenatally stressed adult offspring in the ventral tegmental area, whereas no changes are observed in the substantia nigra area (at protein level). Not expressed in quiescent liver but is rapidly induced following partial hepatectomy and is specific to hepatic growth as it is not induced in other mitogen-treated cells. Expressed at very low levels in the lung, spleen and stomach and at high levels in the brain.

The protein localises to the cytoplasm. The protein resides in the nucleus. Functionally, transcriptional regulator which is important for the differentiation and maintenance of meso-diencephalic dopaminergic (mdDA) neurons during development. It is crucial for expression of a set of genes such as SLC6A3, SLC18A2, TH and DRD2 which are essential for development of mdDA neurons. May confer liver-specific regulation of delayed-early genes induced later in the G1 phase of regeneration along with NR4A1. The sequence is that of Nuclear receptor subfamily 4 group A member 2 (Nr4a2) from Rattus norvegicus (Rat).